The sequence spans 431 residues: Trigger factor (431 aa).

The 86-residue stretch at 158–243 folds into the PPIase FKBP-type domain; the sequence is GYLVALETWS…VIEVSEPVLL (86 aa).

Belongs to the FKBP-type PPIase family. Tig subfamily.

It is found in the cytoplasm. It catalyses the reaction [protein]-peptidylproline (omega=180) = [protein]-peptidylproline (omega=0). Functionally, involved in protein export. Acts as a chaperone by maintaining the newly synthesized protein in an open conformation. Functions as a peptidyl-prolyl cis-trans isomerase. This Xylella fastidiosa (strain M23) protein is Trigger factor.